Here is a 477-residue protein sequence, read N- to C-terminus: tRNA-2-methylthio-N(6)-dimethylallyladenosine synthase (477 aa).

The region spanning 9–129 is the MTTase N-terminal domain; it reads RKLHIKSYGC…LPQLLARAKT (121 aa). [4Fe-4S] cluster contacts are provided by Cys-18, Cys-54, Cys-92, Cys-170, Cys-174, and Cys-177. A Radical SAM core domain is found at 156 to 386; sequence RSRGISAFVT…QLQNLIDSQQ (231 aa). The TRAM domain occupies 391–453; sequence RTALGRTIDV…RYSLFGTLAS (63 aa). The interval 454–477 is disordered; sequence KPTSGEPSNHAATGGAQFQTTAGA. Low complexity predominate over residues 464–477; that stretch reads AATGGAQFQTTAGA.

Belongs to the methylthiotransferase family. MiaB subfamily. Monomer. It depends on [4Fe-4S] cluster as a cofactor.

It localises to the cytoplasm. It catalyses the reaction N(6)-dimethylallyladenosine(37) in tRNA + (sulfur carrier)-SH + AH2 + 2 S-adenosyl-L-methionine = 2-methylsulfanyl-N(6)-dimethylallyladenosine(37) in tRNA + (sulfur carrier)-H + 5'-deoxyadenosine + L-methionine + A + S-adenosyl-L-homocysteine + 2 H(+). Functionally, catalyzes the methylthiolation of N6-(dimethylallyl)adenosine (i(6)A), leading to the formation of 2-methylthio-N6-(dimethylallyl)adenosine (ms(2)i(6)A) at position 37 in tRNAs that read codons beginning with uridine. The sequence is that of tRNA-2-methylthio-N(6)-dimethylallyladenosine synthase from Nitrobacter winogradskyi (strain ATCC 25391 / DSM 10237 / CIP 104748 / NCIMB 11846 / Nb-255).